Reading from the N-terminus, the 555-residue chain is Sulfite reductase [ferredoxin] 2 (555 aa).

Residues 1-31 (MTTARPAKARNEGQWALGNREPLNPNEEMKQ) form a disordered region. Residues 69–161 (YTQREQGYDG…AVGLRTTEAC (93 aa)) constitute a cross-link (3'-(S-cysteinyl)-tyrosine (Tyr-Cys)). Residues cysteine 417, cysteine 423, cysteine 463, and cysteine 467 each coordinate [4Fe-4S] cluster. Cysteine 467 contributes to the siroheme binding site.

Belongs to the nitrite and sulfite reductase 4Fe-4S domain family. In terms of assembly, monomer. Requires siroheme as cofactor. [4Fe-4S] cluster serves as cofactor.

The enzyme catalyses hydrogen sulfide + 6 oxidized [2Fe-2S]-[ferredoxin] + 3 H2O = sulfite + 6 reduced [2Fe-2S]-[ferredoxin] + 7 H(+). Catalyzes the reduction of sulfite to sulfide, a step in the biosynthesis of sulfur-containing amino acids and cofactors. This chain is Sulfite reductase [ferredoxin] 2 (sir2), found in Mycolicibacterium paratuberculosis (strain ATCC BAA-968 / K-10) (Mycobacterium paratuberculosis).